We begin with the raw amino-acid sequence, 246 residues long: DNA repair protein RecO (246 aa).

It belongs to the RecO family.

Functionally, involved in DNA repair and RecF pathway recombination. This Maridesulfovibrio salexigens (strain ATCC 14822 / DSM 2638 / NCIMB 8403 / VKM B-1763) (Desulfovibrio salexigens) protein is DNA repair protein RecO.